The following is a 495-amino-acid chain: Cytochrome P450 Tp4149 (495 aa).

2 consecutive transmembrane segments (helical) span residues 4–24 (ILSLETLLISWLSSFILMFFI) and 208–228 (YLSMFNLFSVGSYIPWLSWVD). The N-linked (GlcNAc...) asparagine glycan is linked to Asn419. Heme is bound at residue Cys437.

Belongs to the cytochrome P450 family. Requires heme as cofactor.

The protein localises to the membrane. Its pathway is secondary metabolite biosynthesis; terpenoid biosynthesis. Functionally, probably involved in the biosynthesis of germacrene-derived sesquiterpene lactones. In Tanacetum parthenium (Feverfew), this protein is Cytochrome P450 Tp4149.